The chain runs to 116 residues: Probable prefoldin subunit 2 (116 aa).

It belongs to the prefoldin subunit beta family. As to quaternary structure, heterohexamer of two PFD-alpha type and four PFD-beta type subunits.

Binds specifically to cytosolic chaperonin (c-CPN) and transfers target proteins to it. Binds to nascent polypeptide chain and promotes folding in an environment in which there are many competing pathways for nonnative proteins. In Dictyostelium discoideum (Social amoeba), this protein is Probable prefoldin subunit 2 (pfdn2).